Reading from the N-terminus, the 134-residue chain is Small ribosomal subunit protein uS11 (134 aa).

Belongs to the universal ribosomal protein uS11 family. As to quaternary structure, part of the 30S ribosomal subunit. Interacts with proteins S7 and S18. Binds to IF-3.

Functionally, located on the platform of the 30S subunit, it bridges several disparate RNA helices of the 16S rRNA. Forms part of the Shine-Dalgarno cleft in the 70S ribosome. The polypeptide is Small ribosomal subunit protein uS11 (Acidovorax ebreus (strain TPSY) (Diaphorobacter sp. (strain TPSY))).